Consider the following 185-residue polypeptide: MKIKEVIVVEGKDDTKRIQMAVNADTLETRGSAISDETLDQIEDLYDKRGVIVFTDPDFSGEKIRKIITEAIPGVKHAFLTKHDAAPSHKGSLGVEHASPEAIREALAHLYTEVPDGEPLISREDLAVAGLTSGPQAKEYRRRLGEYLRIGYTNGKQLYKRLKLFQITPDEFKKALEYIKNEDNY.

The region spanning lysine 4–proline 87 is the Toprim domain. Positions 10, 56, and 58 each coordinate Mg(2+).

Belongs to the ribonuclease M5 family. It depends on Mg(2+) as a cofactor.

It is found in the cytoplasm. It catalyses the reaction Endonucleolytic cleavage of RNA, removing 21 and 42 nucleotides, respectively, from the 5'- and 3'-termini of a 5S-rRNA precursor.. In terms of biological role, required for correct processing of both the 5' and 3' ends of 5S rRNA precursor. Cleaves both sides of a double-stranded region yielding mature 5S rRNA in one step. The protein is Ribonuclease M5 1 of Ligilactobacillus salivarius (strain UCC118) (Lactobacillus salivarius).